The following is a 484-amino-acid chain: ATP synthase subunit beta, chloroplastic (484 aa).

163–170 contributes to the ATP binding site; sequence GGAGVGKT.

This sequence belongs to the ATPase alpha/beta chains family. F-type ATPases have 2 components, CF(1) - the catalytic core - and CF(0) - the membrane proton channel. CF(1) has five subunits: alpha(3), beta(3), gamma(1), delta(1), epsilon(1). CF(0) has four main subunits: a(1), b(1), b'(1) and c(9-12).

The protein resides in the plastid. It localises to the chloroplast thylakoid membrane. The catalysed reaction is ATP + H2O + 4 H(+)(in) = ADP + phosphate + 5 H(+)(out). Its function is as follows. Produces ATP from ADP in the presence of a proton gradient across the membrane. The catalytic sites are hosted primarily by the beta subunits. This chain is ATP synthase subunit beta, chloroplastic, found in Stigeoclonium helveticum (Green alga).